Consider the following 107-residue polypeptide: Nucleoid-associated protein Mmar10_0436 (107 aa).

This sequence belongs to the YbaB/EbfC family. In terms of assembly, homodimer.

The protein localises to the cytoplasm. It localises to the nucleoid. In terms of biological role, binds to DNA and alters its conformation. May be involved in regulation of gene expression, nucleoid organization and DNA protection. The polypeptide is Nucleoid-associated protein Mmar10_0436 (Maricaulis maris (strain MCS10) (Caulobacter maris)).